A 205-amino-acid polypeptide reads, in one-letter code: Adenylyl-sulfate kinase (205 aa).

31-38 (GLSGAGKS) lines the ATP pocket. Serine 105 acts as the Phosphoserine intermediate in catalysis.

It belongs to the APS kinase family.

The enzyme catalyses adenosine 5'-phosphosulfate + ATP = 3'-phosphoadenylyl sulfate + ADP + H(+). Its pathway is sulfur metabolism; hydrogen sulfide biosynthesis; sulfite from sulfate: step 2/3. Its function is as follows. Catalyzes the synthesis of activated sulfate. This chain is Adenylyl-sulfate kinase, found in Shewanella baltica (strain OS223).